Reading from the N-terminus, the 265-residue chain is Probable U2 small nuclear ribonucleoprotein A' (265 aa).

LRR repeat units follow at residues 20-41 (RERE…GATL), 43-64 (QFDT…PHLP), 65-86 (RLKC…LEEA), and 89-110 (NLGS…EPLV). Residues 123–161 (NPVSTKPNYREYMAYKFPQLRLLDFRKIKQKDRQAAQEF) form the LRRCT domain.

The protein belongs to the U2 small nuclear ribonucleoprotein A family. As to quaternary structure, interacts with the SMN complex.

Its subcellular location is the nucleus. Functionally, involved in pre-mRNA splicing as component of the spliceosome. Associated with sn-RNP U2, where it contributes to the binding of stem loop IV of U2 snRNA. In the germ line, has a role in oogenesis, by regulating spermatogenesis and nurse cell nuclei chromatin decondensation and dispersal, probably by regulating the splicing of proteins necessary for germline differentiation such as the meiotic protein mei-P26. The protein is Probable U2 small nuclear ribonucleoprotein A' (U2A) of Drosophila melanogaster (Fruit fly).